We begin with the raw amino-acid sequence, 290 residues long: Cbb3-type cytochrome c oxidase subunit FixP (290 aa).

Over 1–32 (MTDHSEFDSVSGKTTTGHEWDGIKELNTPLPR) the chain is Cytoplasmic. The helical transmembrane segment at 33–53 (WWVICFYLTIVWAIGYWIVYP) threads the bilayer. Residues 54 to 290 (AWPLISSNTT…VYVHSLGGGK (237 aa)) are Periplasmic-facing. 2 Cytochrome c domains span residues 109 to 198 (LARA…RSLS) and 206 to 287 (YDAA…HSLG). Cysteine 122, cysteine 125, histidine 126, methionine 173, cysteine 219, cysteine 222, histidine 223, and methionine 264 together coordinate heme c.

Belongs to the CcoP / FixP family. Component of the cbb3-type cytochrome c oxidase at least composed of FixN, FixO, FixQ and FixP. It depends on heme c as a cofactor.

It localises to the cell inner membrane. It participates in energy metabolism; oxidative phosphorylation. In terms of biological role, C-type cytochrome. Part of the cbb3-type cytochrome c oxidase complex. FixP subunit is required for transferring electrons from donor cytochrome c via its heme groups to FixO subunit. From there, electrons are shuttled to the catalytic binuclear center of FixN subunit where oxygen reduction takes place. The complex also functions as a proton pump. This chain is Cbb3-type cytochrome c oxidase subunit FixP, found in Bradyrhizobium diazoefficiens (strain JCM 10833 / BCRC 13528 / IAM 13628 / NBRC 14792 / USDA 110).